A 211-amino-acid polypeptide reads, in one-letter code: Ribosomal RNA small subunit methyltransferase G (211 aa).

Residues Gly73, 125-126, and Arg141 contribute to the S-adenosyl-L-methionine site; that span reads IE.

This sequence belongs to the methyltransferase superfamily. RNA methyltransferase RsmG family.

Its subcellular location is the cytoplasm. The catalysed reaction is guanosine(527) in 16S rRNA + S-adenosyl-L-methionine = N(7)-methylguanosine(527) in 16S rRNA + S-adenosyl-L-homocysteine. Specifically methylates the N7 position of guanine in position 527 of 16S rRNA. This chain is Ribosomal RNA small subunit methyltransferase G, found in Methylobacterium radiotolerans (strain ATCC 27329 / DSM 1819 / JCM 2831 / NBRC 15690 / NCIMB 10815 / 0-1).